Consider the following 298-residue polypeptide: Homoserine kinase (298 aa).

Residue 83–93 (PISRGLGSSSS) participates in ATP binding.

This sequence belongs to the GHMP kinase family. Homoserine kinase subfamily.

Its subcellular location is the cytoplasm. It catalyses the reaction L-homoserine + ATP = O-phospho-L-homoserine + ADP + H(+). Its pathway is amino-acid biosynthesis; L-threonine biosynthesis; L-threonine from L-aspartate: step 4/5. Functionally, catalyzes the ATP-dependent phosphorylation of L-homoserine to L-homoserine phosphate. In Clostridium botulinum (strain Eklund 17B / Type B), this protein is Homoserine kinase.